The chain runs to 598 residues: Pentatricopeptide repeat-containing protein At5g14820, mitochondrial (598 aa).

A mitochondrion-targeting transit peptide spans 1–98; sequence MAAAPWLYLS…RGFSSGSSNV (98 aa). 10 PPR repeats span residues 193 to 227, 229 to 261, 262 to 292, 296 to 330, 331 to 365, 366 to 400, 401 to 435, 436 to 470, 471 to 505, and 506 to 540; these read DSRT…GLLT, ETFT…KFKI, GVET…LKER, NMMT…GLKP, DIVA…GPCP, NVRS…GLQP, DAAV…GHPP, DGKT…EIEP, SIHT…GICP, and DDNS…GMKT.

Belongs to the PPR family. P subfamily.

It localises to the mitochondrion. The protein is Pentatricopeptide repeat-containing protein At5g14820, mitochondrial of Arabidopsis thaliana (Mouse-ear cress).